A 344-amino-acid polypeptide reads, in one-letter code: Heat-inducible transcription repressor HrcA (344 aa).

This sequence belongs to the HrcA family.

Functionally, negative regulator of class I heat shock genes (grpE-dnaK-dnaJ and groELS operons). Prevents heat-shock induction of these operons. The protein is Heat-inducible transcription repressor HrcA of Streptococcus pneumoniae (strain Taiwan19F-14).